An 84-amino-acid polypeptide reads, in one-letter code: MVLQNDIDLLNPPAELEKRKHKLKRLVQSPNSFFMDVKCQGCFNITTVFSHSQTVVMCGNCQTLLCTPTGGKAKLTEGCSFRKK.

Residues 39-61 (CQGCFNITTVFSHSQTVVMCGNC) form a C4-type zinc finger.

It belongs to the eukaryotic ribosomal protein eS27 family. (Microbial infection) May interact with Tomato yellow leaf curl virus (TYLCV) and papaya leaf curl China virus (PaLcuCNV) C2 proteins. This interaction prevents activation of Jasmonate signaling, thereby facilitating viral uptake by insects vectors. It depends on Zn(2+) as a cofactor.

The sequence is that of Small ribosomal subunit protein eS27z (RPS27A) from Arabidopsis thaliana (Mouse-ear cress).